The chain runs to 184 residues: Photosystem I assembly protein Ycf4 (184 aa).

2 consecutive transmembrane segments (helical) span residues 19 to 39 (ISNF…LLVG) and 57 to 77 (IVFF…LFIS).

This sequence belongs to the Ycf4 family.

The protein resides in the plastid. Its subcellular location is the chloroplast thylakoid membrane. Its function is as follows. Seems to be required for the assembly of the photosystem I complex. This Atropa belladonna (Belladonna) protein is Photosystem I assembly protein Ycf4.